The following is a 476-amino-acid chain: tRNA sulfurtransferase (476 aa).

Residues 54–156 (AENDIPLSKV…GKDALIYDKI (103 aa)) form the THUMP domain. ATP-binding positions include 174–175 (MV), Lys-256, Gly-278, and Gln-287. An intrachain disulfide couples Cys-334 to Cys-433. The region spanning 388–470 (NLEDAVFIDL…LSKQKGSVDE (83 aa)) is the Rhodanese domain. Catalysis depends on Cys-433, which acts as the Cysteine persulfide intermediate.

Belongs to the ThiI family.

The protein resides in the cytoplasm. It carries out the reaction [ThiI sulfur-carrier protein]-S-sulfanyl-L-cysteine + a uridine in tRNA + 2 reduced [2Fe-2S]-[ferredoxin] + ATP + H(+) = [ThiI sulfur-carrier protein]-L-cysteine + a 4-thiouridine in tRNA + 2 oxidized [2Fe-2S]-[ferredoxin] + AMP + diphosphate. The catalysed reaction is [ThiS sulfur-carrier protein]-C-terminal Gly-Gly-AMP + S-sulfanyl-L-cysteinyl-[cysteine desulfurase] + AH2 = [ThiS sulfur-carrier protein]-C-terminal-Gly-aminoethanethioate + L-cysteinyl-[cysteine desulfurase] + A + AMP + 2 H(+). It functions in the pathway cofactor biosynthesis; thiamine diphosphate biosynthesis. Its function is as follows. Catalyzes the ATP-dependent transfer of a sulfur to tRNA to produce 4-thiouridine in position 8 of tRNAs, which functions as a near-UV photosensor. Also catalyzes the transfer of sulfur to the sulfur carrier protein ThiS, forming ThiS-thiocarboxylate. This is a step in the synthesis of thiazole, in the thiamine biosynthesis pathway. The sulfur is donated as persulfide by IscS. This chain is tRNA sulfurtransferase, found in Thermoplasma volcanium (strain ATCC 51530 / DSM 4299 / JCM 9571 / NBRC 15438 / GSS1).